The following is a 184-amino-acid chain: Antigen Sm21.7 (184 aa).

One can recognise an EF-hand domain in the interval 37–72; it reads LDMKQVNEWIALFDVDKDQKITFEEFCRGLGLKQNE. Residues aspartate 50, aspartate 52, aspartate 54, lysine 56, and glutamate 61 each contribute to the Ca(2+) site.

This Schistosoma mansoni (Blood fluke) protein is Antigen Sm21.7 (SM21.7).